We begin with the raw amino-acid sequence, 877 residues long: Phosphoenolpyruvate carboxylase (877 aa).

Residues H138 and K544 contribute to the active site.

This sequence belongs to the PEPCase type 1 family. Requires Mg(2+) as cofactor.

The enzyme catalyses oxaloacetate + phosphate = phosphoenolpyruvate + hydrogencarbonate. Its function is as follows. Forms oxaloacetate, a four-carbon dicarboxylic acid source for the tricarboxylic acid cycle. The polypeptide is Phosphoenolpyruvate carboxylase (Vibrio vulnificus (strain YJ016)).